We begin with the raw amino-acid sequence, 376 residues long: Chorismate synthase (376 aa).

The NADP(+) site is built by Arg-39 and Arg-45. FMN-binding positions include 115–117 (RSS), Gly-276, 291–295 (KPIPT), and Arg-317.

The protein belongs to the chorismate synthase family. In terms of assembly, homotetramer. Requires FMNH2 as cofactor.

It catalyses the reaction 5-O-(1-carboxyvinyl)-3-phosphoshikimate = chorismate + phosphate. Its pathway is metabolic intermediate biosynthesis; chorismate biosynthesis; chorismate from D-erythrose 4-phosphate and phosphoenolpyruvate: step 7/7. Functionally, catalyzes the anti-1,4-elimination of the C-3 phosphate and the C-6 proR hydrogen from 5-enolpyruvylshikimate-3-phosphate (EPSP) to yield chorismate, which is the branch point compound that serves as the starting substrate for the three terminal pathways of aromatic amino acid biosynthesis. This reaction introduces a second double bond into the aromatic ring system. In Thermotoga sp. (strain RQ2), this protein is Chorismate synthase.